The primary structure comprises 100 residues: Urease subunit gamma (100 aa).

Belongs to the urease gamma subunit family. As to quaternary structure, heterotrimer of UreA (gamma), UreB (beta) and UreC (alpha) subunits. Three heterotrimers associate to form the active enzyme.

It localises to the cytoplasm. The enzyme catalyses urea + 2 H2O + H(+) = hydrogencarbonate + 2 NH4(+). The protein operates within nitrogen metabolism; urea degradation; CO(2) and NH(3) from urea (urease route): step 1/1. The protein is Urease subunit gamma of Methylobacillus flagellatus (strain ATCC 51484 / DSM 6875 / VKM B-1610 / KT).